The sequence spans 648 residues: 5-aminolevulinate synthase, mitochondrial (648 aa).

The N-terminal 26 residues, 1-26, are a transit peptide targeting the mitochondrion; that stretch reads MEALLQQSRAMCPFLKRSSPNTLRSL. The disordered stretch occupies residues 69-109; that stretch reads KRFTSSAAGVPGAGAGTPKPTRGSPGKRALHSTGGNGANMS. Positions 170, 283, and 302 each coordinate substrate. Residues Ser-335, His-363, and Thr-409 each contribute to the pyridoxal 5'-phosphate site. Lys-412 is a catalytic residue. Position 412 is an N6-(pyridoxal phosphate)lysine (Lys-412). The pyridoxal 5'-phosphate site is built by Thr-441 and Thr-442. Residue Thr-527 participates in substrate binding.

Belongs to the class-II pyridoxal-phosphate-dependent aminotransferase family. In terms of assembly, homodimer. Pyridoxal 5'-phosphate serves as cofactor.

It localises to the mitochondrion matrix. The enzyme catalyses succinyl-CoA + glycine + H(+) = 5-aminolevulinate + CO2 + CoA. It participates in porphyrin-containing compound metabolism; protoporphyrin-IX biosynthesis; 5-aminolevulinate from glycine: step 1/1. Its function is as follows. Catalyzes the synthesis of 5-aminolevulinate (ALA) from succinyl-CoA and glycine, the first and rate-limiting step in heme biosynthesis. This is 5-aminolevulinate synthase, mitochondrial (hemA) from Emericella nidulans (strain FGSC A4 / ATCC 38163 / CBS 112.46 / NRRL 194 / M139) (Aspergillus nidulans).